Reading from the N-terminus, the 113-residue chain is Teretoxin Tan14.1 (113 aa).

An N-terminal signal peptide occupies residues M1–V21. The propeptide occupies H22–R86.

Belongs to the teretoxin N (TN) superfamily. Post-translationally, contains 2 disulfide bonds. As to expression, expressed by the venom duct.

It localises to the secreted. The sequence is that of Teretoxin Tan14.1 from Terebra anilis (Auger snail).